Consider the following 659-residue polypeptide: Exoribonuclease 2 (659 aa).

Positions 189–532 (RRDLTALHFV…NHRLIKACLA (344 aa)) constitute an RNB domain. Residues 577–659 (NPEFRAEVQD…ETRSLIGNLV (83 aa)) form the S1 motif domain.

Belongs to the RNR ribonuclease family. RNase II subfamily.

The protein localises to the cytoplasm. The enzyme catalyses Exonucleolytic cleavage in the 3'- to 5'-direction to yield nucleoside 5'-phosphates.. Involved in mRNA degradation. Hydrolyzes single-stranded polyribonucleotides processively in the 3' to 5' direction. The polypeptide is Exoribonuclease 2 (Mannheimia succiniciproducens (strain KCTC 0769BP / MBEL55E)).